The primary structure comprises 369 residues: RAB6-interacting golgin (369 aa).

Residues 1–128 are disordered; it reads MAQGWAGFSE…HNNVEILPPK (128 aa). Over residues 11–27 the composition is skewed to basic and acidic residues; that stretch reads EELRRLKQTKDPFEPQR. Composition is skewed to polar residues over residues 46–61 and 82–93; these read EQSQ…TSLL and SPTLPSHFTLTS. The span at 106–120 shows a compositional bias: basic and acidic residues; the sequence is QPKELGLENSHDGHN. The stretch at 145–297 forms a coiled coil; sequence RWEVLQQEQR…EVERLLHEQE (153 aa). Residues 188–369 are necessary for interaction with RCHY1; that stretch reads IQKELQALDD…GNDISAALAT (182 aa). Residues 334 to 369 are disordered; that stretch reads VSPKVDDQCGNSSSIPFLSPNCPNQEGNDISAALAT. A compositionally biased stretch (polar residues) spans 342–361; that stretch reads CGNSSSIPFLSPNCPNQEGN.

Belongs to the GORAB family. Interacts with SCYL1. Interacts with RCHY1 and RAB6A/RAB6.

It localises to the cytoplasm. The protein localises to the golgi apparatus. This chain is RAB6-interacting golgin (GORAB), found in Homo sapiens (Human).